Here is a 219-residue protein sequence, read N- to C-terminus: ATP-dependent Clp protease proteolytic subunit (219 aa).

A disordered region spans residues 1–22 (MPVGVPKVPFLNPNPDPEPDSV). The Nucleophile role is filled by Ser-116. The active site involves His-141.

Belongs to the peptidase S14 family. As to quaternary structure, component of the chloroplastic Clp protease core complex.

The protein localises to the plastid. It localises to the chloroplast stroma. It carries out the reaction Hydrolysis of proteins to small peptides in the presence of ATP and magnesium. alpha-casein is the usual test substrate. In the absence of ATP, only oligopeptides shorter than five residues are hydrolyzed (such as succinyl-Leu-Tyr-|-NHMec, and Leu-Tyr-Leu-|-Tyr-Trp, in which cleavage of the -Tyr-|-Leu- and -Tyr-|-Trp bonds also occurs).. Cleaves peptides in various proteins in a process that requires ATP hydrolysis. Has a chymotrypsin-like activity. Plays a major role in the degradation of misfolded proteins. The sequence is that of ATP-dependent Clp protease proteolytic subunit from Pelargonium hortorum (Common geranium).